A 426-amino-acid chain; its full sequence is Histidine--tRNA ligase (426 aa).

It belongs to the class-II aminoacyl-tRNA synthetase family. As to quaternary structure, homodimer.

The protein resides in the cytoplasm. It carries out the reaction tRNA(His) + L-histidine + ATP = L-histidyl-tRNA(His) + AMP + diphosphate + H(+). The polypeptide is Histidine--tRNA ligase (Shewanella baltica (strain OS195)).